The primary structure comprises 549 residues: Cytochrome c oxidase subunit 1 homolog, bacteroid (549 aa).

3 helical membrane passes run isoleucine 12 to alanine 32, proline 39 to valine 59, and phenylalanine 87 to alanine 107. Residue histidine 131 participates in heme b binding. Transmembrane regions (helical) follow at residues threonine 132–valine 152, phenylalanine 168–valine 188, alanine 201–isoleucine 221, isoleucine 228–glycine 248, glycine 279–isoleucine 299, leucine 312–leucine 332, leucine 344–leucine 364, and methionine 382–isoleucine 402. Cu cation is bound by residues histidine 280, histidine 330, and histidine 331. 2 residues coordinate heme b: histidine 418 and histidine 420. 3 helical membrane passes run alanine 423 to tryptophan 443, phenylalanine 458 to leucine 478, and alanine 512 to valine 532.

The protein belongs to the heme-copper respiratory oxidase family. Cu(2+) serves as cofactor. It depends on heme b as a cofactor.

Its subcellular location is the cell membrane. The enzyme catalyses 4 Fe(II)-[cytochrome c] + O2 + 8 H(+)(in) = 4 Fe(III)-[cytochrome c] + 2 H2O + 4 H(+)(out). It participates in energy metabolism; oxidative phosphorylation. Functionally, cytochrome c oxidase is the component of the respiratory chain that catalyzes the reduction of oxygen to water. Subunits 1-3 form the functional core of the enzyme complex. Co I is the catalytic subunit of the enzyme. Electrons originating in cytochrome c or a quinol are transferred to the bimetallic center formed by a high-spin heme and copper B. This chain is Cytochrome c oxidase subunit 1 homolog, bacteroid (fixN), found in Bradyrhizobium diazoefficiens (strain JCM 10833 / BCRC 13528 / IAM 13628 / NBRC 14792 / USDA 110).